Consider the following 629-residue polypeptide: tRNA uridine 5-carboxymethylaminomethyl modification enzyme MnmG (629 aa).

13 to 18 is an FAD binding site; the sequence is GGGHAG. Residue 273–287 coordinates NAD(+); it reads GPRYCPSIEDKVNRF.

This sequence belongs to the MnmG family. In terms of assembly, homodimer. Heterotetramer of two MnmE and two MnmG subunits. FAD is required as a cofactor.

Its subcellular location is the cytoplasm. Functionally, NAD-binding protein involved in the addition of a carboxymethylaminomethyl (cmnm) group at the wobble position (U34) of certain tRNAs, forming tRNA-cmnm(5)s(2)U34. In Shewanella pealeana (strain ATCC 700345 / ANG-SQ1), this protein is tRNA uridine 5-carboxymethylaminomethyl modification enzyme MnmG.